We begin with the raw amino-acid sequence, 250 residues long: tRNA (guanine-N(1)-)-methyltransferase (250 aa).

S-adenosyl-L-methionine contacts are provided by residues Gly-116 and 136 to 141 (IGDYVL).

It belongs to the RNA methyltransferase TrmD family. Homodimer.

Its subcellular location is the cytoplasm. The catalysed reaction is guanosine(37) in tRNA + S-adenosyl-L-methionine = N(1)-methylguanosine(37) in tRNA + S-adenosyl-L-homocysteine + H(+). In terms of biological role, specifically methylates guanosine-37 in various tRNAs. The chain is tRNA (guanine-N(1)-)-methyltransferase from Pseudomonas entomophila (strain L48).